The following is a 241-amino-acid chain: Aspartate/glutamate leucyltransferase (241 aa).

The protein belongs to the R-transferase family. Bpt subfamily.

The protein localises to the cytoplasm. The catalysed reaction is N-terminal L-glutamyl-[protein] + L-leucyl-tRNA(Leu) = N-terminal L-leucyl-L-glutamyl-[protein] + tRNA(Leu) + H(+). It carries out the reaction N-terminal L-aspartyl-[protein] + L-leucyl-tRNA(Leu) = N-terminal L-leucyl-L-aspartyl-[protein] + tRNA(Leu) + H(+). Its function is as follows. Functions in the N-end rule pathway of protein degradation where it conjugates Leu from its aminoacyl-tRNA to the N-termini of proteins containing an N-terminal aspartate or glutamate. In Parvibaculum lavamentivorans (strain DS-1 / DSM 13023 / NCIMB 13966), this protein is Aspartate/glutamate leucyltransferase.